The following is a 428-amino-acid chain: Glutamyl-tRNA reductase (428 aa).

Residues 49 to 52 (TCNR), Ser-109, 114 to 116 (EGQ), and Gln-120 contribute to the substrate site. Residue Cys-50 is the Nucleophile of the active site. 189 to 194 (GAGKMA) contributes to the NADP(+) binding site.

It belongs to the glutamyl-tRNA reductase family. In terms of assembly, homodimer.

It catalyses the reaction (S)-4-amino-5-oxopentanoate + tRNA(Glu) + NADP(+) = L-glutamyl-tRNA(Glu) + NADPH + H(+). The protein operates within porphyrin-containing compound metabolism; protoporphyrin-IX biosynthesis; 5-aminolevulinate from L-glutamyl-tRNA(Glu): step 1/2. Its pathway is porphyrin-containing compound metabolism; chlorophyll biosynthesis. In terms of biological role, catalyzes the NADPH-dependent reduction of glutamyl-tRNA(Glu) to glutamate 1-semialdehyde (GSA). This chain is Glutamyl-tRNA reductase, found in Rippkaea orientalis (strain PCC 8801 / RF-1) (Cyanothece sp. (strain PCC 8801)).